Reading from the N-terminus, the 265-residue chain is Imidazole glycerol phosphate synthase subunit HisF (265 aa).

Catalysis depends on residues Asp17 and Asp136.

This sequence belongs to the HisA/HisF family. Heterodimer of HisH and HisF.

It localises to the cytoplasm. It catalyses the reaction 5-[(5-phospho-1-deoxy-D-ribulos-1-ylimino)methylamino]-1-(5-phospho-beta-D-ribosyl)imidazole-4-carboxamide + L-glutamine = D-erythro-1-(imidazol-4-yl)glycerol 3-phosphate + 5-amino-1-(5-phospho-beta-D-ribosyl)imidazole-4-carboxamide + L-glutamate + H(+). The protein operates within amino-acid biosynthesis; L-histidine biosynthesis; L-histidine from 5-phospho-alpha-D-ribose 1-diphosphate: step 5/9. IGPS catalyzes the conversion of PRFAR and glutamine to IGP, AICAR and glutamate. The HisF subunit catalyzes the cyclization activity that produces IGP and AICAR from PRFAR using the ammonia provided by the HisH subunit. The protein is Imidazole glycerol phosphate synthase subunit HisF of Mycobacterium avium (strain 104).